A 355-amino-acid chain; its full sequence is MHC class I-like protein MILL2 (355 aa).

An N-terminal signal peptide occupies residues 1 to 29; it reads MKASSGKPREFRPAVLLLILGLLLRDSRG. The tract at residues 46-137 is alpha-1; that stretch reads RLTRTHTLRY…VINQKSQEEG (92 aa). 3 disulfide bridges follow: cysteine 96-cysteine 107, cysteine 147-cysteine 210, and cysteine 249-cysteine 306. N-linked (GlcNAc...) asparagine glycans are attached at residues asparagine 104 and asparagine 152. The alpha-2 stretch occupies residues 138-229; sequence LHTLQATLGC…SLRNGLQDTG (92 aa). Residues 230 to 323 are alpha-3; sequence PPMVTVTCRN…SIMQTAVSGH (94 aa). An Ig-like C1-type domain is found at 231–321; it reads PMVTVTCRNY…NHSIMQTAVS (91 aa). A glycan (N-linked (GlcNAc...) asparagine) is linked at asparagine 312. Residues 324-329 are connecting peptide; it reads AAEDSQ. The GPI-anchor amidated aspartate moiety is linked to residue aspartate 330. The propeptide at 331-355 is removed in mature form; sequence VASSATASAGSALPVVLAVALARAN.

The protein belongs to the MHC class I family. As to quaternary structure, heterodimer with B2M (beta-2-microglobulin). In terms of processing, N-glycosylated. In terms of tissue distribution, ubiquitously expressed in neonatal and adult tissues.

It localises to the cell membrane. Functionally, binds to heparan sulfate proteoglycans on the surface of fibroblast (NIH-3T3) cells. In Mus musculus (Mouse), this protein is MHC class I-like protein MILL2.